The chain runs to 268 residues: Single-stranded DNA-binding protein WHY3, chloroplastic (268 aa).

The transit peptide at 1-75 (MSQLLSSPPM…KQRFGDSSSS (75 aa)) directs the protein to the chloroplast. Residues 93–98 (KGKAAL) are required for ssDNA binding. Residues 171–185 (KGKGSDEGKVRKVLK) carry the Nuclear localization signal motif.

Belongs to the Whirly family. As to quaternary structure, homotetramer.

It is found in the plastid. Its subcellular location is the chloroplast. The protein localises to the nucleus. Its function is as follows. Single-stranded DNA-binding protein that functions in both chloroplasts and nucleus. In chloroplasts, maintains plastid genome stability by preventing break-induced and short homology-dependent illegitimate recombinations. In the nucleus, is recruited to a distal element upstream of the kinesin KP1 to mediate the transcriptional repression of KP1. Can bind double-stranded DNA in vivo. In Arabidopsis thaliana (Mouse-ear cress), this protein is Single-stranded DNA-binding protein WHY3, chloroplastic (WHY3).